The following is a 241-amino-acid chain: Alkylated DNA repair protein ALKBH6 homolog (241 aa).

In terms of domain architecture, Fe2OG dioxygenase spans Ala87 to Pro232. His105, Asp107, and His181 together coordinate Fe cation. Residues Arg223 and Arg229 each coordinate 2-oxoglutarate.

The protein belongs to the alkB family. Requires Fe(2+) as cofactor.

The protein resides in the nucleus. Functionally, probable RNA demethylase that binds to both N6-methyladenosine-containing- (m(6)A) and C5-methylcytidine-containing- (m(5)C) RNAs, thus being a probable m(6)A and m(5)C eraser. Involved in responses to abscisic acid (ABA) via the modulation of the expression of ABA signaling-related genes (e.g. ABI3 and ABI4). Acts as a negative regulator during seed germination under abiotic stresses (e.g. salt, cold and ABA). Positive modulator of seedling growth and survival in response to drought and heat, but counteracts tolerance to salt. This chain is Alkylated DNA repair protein ALKBH6 homolog, found in Arabidopsis thaliana (Mouse-ear cress).